Here is a 316-residue protein sequence, read N- to C-terminus: Transcription initiation factor IIB (316 aa).

The TFIIB-type zinc finger occupies 11-42 (PKVTCPNHPDALLVEDYRAGDMICSECGLVVG). Cys15, His18, Cys34, and Cys37 together coordinate Zn(2+). 2 consecutive repeat copies span residues 124–200 (MSDR…LILK) and 218–294 (FCSN…LIYP).

The protein belongs to the TFIIB family.

Its subcellular location is the nucleus. The protein localises to the chromosome. The enzyme catalyses L-lysyl-[protein] + acetyl-CoA = N(6)-acetyl-L-lysyl-[protein] + CoA + H(+). Functionally, general transcription factor that plays a role in transcription initiation by RNA polymerase II (Pol II). Involved in the pre-initiation complex (PIC) formation and Pol II recruitment at promoter DNA. Together with the TATA box-bound TBP forms the core initiation complex and provides a bridge between TBP and the Pol II-TFIIF complex. Released from the PIC early following the onset of transcription during the initiation and elongation transition and reassociates with TBP during the next transcription cycle. Associates with chromatin to core promoter-specific regions. Binds to two distinct DNA core promoter consensus sequence elements in a TBP-independent manner; these IIB-recognition elements (BREs) are localized immediately upstream (BREu), 5'-[GC][GC][GA]CGCC-3', and downstream (BREd), 5'-[GA]T[TGA][TG][GT][TG][TG]-3', of the TATA box element. Modulates transcription start site selection. Also exhibits autoacetyltransferase activity that contributes to the activated transcription. The sequence is that of Transcription initiation factor IIB from Xenopus laevis (African clawed frog).